The primary structure comprises 64 residues: Large ribosomal subunit protein bL33m (64 aa).

Belongs to the bacterial ribosomal protein bL33 family. Component of the mitochondrial ribosome large subunit (39S) which comprises a 16S rRNA and about 50 distinct proteins.

It localises to the mitochondrion. This is Large ribosomal subunit protein bL33m (mRpL33) from Drosophila melanogaster (Fruit fly).